A 95-amino-acid polypeptide reads, in one-letter code: Putative small ubiquitin-related modifier 7 (95 aa).

In terms of domain architecture, Ubiquitin-like spans Ser-13 to Gly-90. Gly-90 is covalently cross-linked (Glycyl lysine isopeptide (Gly-Lys) (interchain with K-? in acceptor proteins)).

This sequence belongs to the ubiquitin family. SUMO subfamily. Interacts with SAE2, SCE1, SIZ1 and MMS21 Covalently attached to a number of proteins.

Its subcellular location is the nucleus. It localises to the cytoplasm. Its function is as follows. Ubiquitin-like protein which can be covalently attached to target lysines as a monomer. Does not seem to be involved in protein degradation and may function as an antagonist of ubiquitin in the degradation process. This Arabidopsis thaliana (Mouse-ear cress) protein is Putative small ubiquitin-related modifier 7 (SUMO7).